Consider the following 295-residue polypeptide: Calcium-regulated actin-bundling protein (295 aa).

Monomer.

Its function is as follows. May contribute to the structure and reorganization of filopodia and pseudopodia accompanying cell movements. This Dictyostelium discoideum (Social amoeba) protein is Calcium-regulated actin-bundling protein (abpB).